A 298-amino-acid polypeptide reads, in one-letter code: ATP synthase gamma chain (298 aa).

The protein belongs to the ATPase gamma chain family. As to quaternary structure, F-type ATPases have 2 components, CF(1) - the catalytic core - and CF(0) - the membrane proton channel. CF(1) has five subunits: alpha(3), beta(3), gamma(1), delta(1), epsilon(1). CF(0) has three main subunits: a, b and c.

It localises to the cell membrane. Its function is as follows. Produces ATP from ADP in the presence of a proton gradient across the membrane. The gamma chain is believed to be important in regulating ATPase activity and the flow of protons through the CF(0) complex. This chain is ATP synthase gamma chain, found in Frankia casuarinae (strain DSM 45818 / CECT 9043 / HFP020203 / CcI3).